Reading from the N-terminus, the 356-residue chain is tRNA N6-adenosine threonylcarbamoyltransferase (356 aa).

The a divalent metal cation site is built by histidine 122, histidine 126, and tyrosine 143. Substrate contacts are provided by residues 143–147, aspartate 175, glycine 190, glutamate 194, and asparagine 287; that span reads YVSGG. Position 315 (aspartate 315) interacts with a divalent metal cation.

This sequence belongs to the KAE1 / TsaD family. As to quaternary structure, component of the EKC/KEOPS complex composed of at least BUD32, CGI121, GON7, KAE1 and PCC1; the whole complex dimerizes. The cofactor is a divalent metal cation.

The protein resides in the cytoplasm. It is found in the nucleus. The enzyme catalyses L-threonylcarbamoyladenylate + adenosine(37) in tRNA = N(6)-L-threonylcarbamoyladenosine(37) in tRNA + AMP + H(+). Its function is as follows. Component of the EKC/KEOPS complex that is required for the formation of a threonylcarbamoyl group on adenosine at position 37 (t(6)A37) in tRNAs that read codons beginning with adenine. The complex is probably involved in the transfer of the threonylcarbamoyl moiety of threonylcarbamoyl-AMP (TC-AMP) to the N6 group of A37. KAE1 likely plays a direct catalytic role in this reaction, but requires other protein(s) of the complex to fulfill this activity. The EKC/KEOPS complex also promotes both telomere uncapping and telomere elongation. The complex is required for efficient recruitment of transcriptional coactivators. The protein is tRNA N6-adenosine threonylcarbamoyltransferase of Chaetomium globosum (strain ATCC 6205 / CBS 148.51 / DSM 1962 / NBRC 6347 / NRRL 1970) (Soil fungus).